The chain runs to 342 residues: Dof zinc finger protein DOF4.6 (342 aa).

The interval 21–54 (NTCPKPQPQPLQPQQPPSVGGERKARPEKDQAVN) is disordered. Pro residues predominate over residues 25 to 36 (KPQPQPLQPQQP). Residues 41-51 (GERKARPEKDQ) are compositionally biased toward basic and acidic residues. The Dof-type zinc finger occupies 53–107 (VNCPRCNSTNTKFCYYNNYSLTQPRYFCKGCRRYWTEGGSLRNIPVGGGSRKNKR). The Zn(2+) site is built by Cys-55, Cys-58, Cys-80, and Cys-83. The tract at residues 94–136 (RNIPVGGGSRKNKRSHSSSSDISNNHSDSTQPATKKHLSDHHH) is disordered. The span at 110–122 (SSSSDISNNHSDS) shows a compositional bias: low complexity. Positions 127–136 (TKKHLSDHHH) are enriched in basic residues.

As to expression, accumulates in the stele.

The protein resides in the nucleus. Transcription factor that binds specifically to a 5'-AA[AG]G-3' consensus core sequence. This chain is Dof zinc finger protein DOF4.6, found in Arabidopsis thaliana (Mouse-ear cress).